The primary structure comprises 681 residues: DNA-directed RNA polymerase subunit beta' (681 aa).

Zn(2+) contacts are provided by Cys69, Cys71, Cys87, and Cys90. Asp489, Asp491, and Asp493 together coordinate Mg(2+).

It belongs to the RNA polymerase beta' chain family. RpoC1 subfamily. As to quaternary structure, in plastids the minimal PEP RNA polymerase catalytic core is composed of four subunits: alpha, beta, beta', and beta''. When a (nuclear-encoded) sigma factor is associated with the core the holoenzyme is formed, which can initiate transcription. Requires Mg(2+) as cofactor. It depends on Zn(2+) as a cofactor.

The protein resides in the plastid. The protein localises to the chloroplast. The enzyme catalyses RNA(n) + a ribonucleoside 5'-triphosphate = RNA(n+1) + diphosphate. In terms of biological role, DNA-dependent RNA polymerase catalyzes the transcription of DNA into RNA using the four ribonucleoside triphosphates as substrates. This Atropa belladonna (Belladonna) protein is DNA-directed RNA polymerase subunit beta'.